The chain runs to 457 residues: Bifunctional protein GlmU (457 aa).

Residues 1 to 229 form a pyrophosphorylase region; the sequence is MSNSAKSVVI…LSEMEGVNNR (229 aa). Residues 11–14, lysine 25, glutamine 76, 81–82, 103–105, glycine 140, glutamate 154, asparagine 169, and asparagine 227 each bind UDP-N-acetyl-alpha-D-glucosamine; these read LAAG, GT, and YGD. Residue aspartate 105 coordinates Mg(2+). Asparagine 227 serves as a coordination point for Mg(2+). The tract at residues 230-250 is linker; sequence LQLSALERIYQSEQAEQLLLA. The segment at 251–457 is N-acetyltransferase; the sequence is GVMLLDPARF…GWKRPVKEKK (207 aa). UDP-N-acetyl-alpha-D-glucosamine is bound by residues arginine 333 and lysine 351. Histidine 363 serves as the catalytic Proton acceptor. Residues tyrosine 366 and asparagine 377 each coordinate UDP-N-acetyl-alpha-D-glucosamine. Acetyl-CoA-binding positions include alanine 380, 386–387, serine 405, alanine 423, and arginine 440; that span reads NY.

It in the N-terminal section; belongs to the N-acetylglucosamine-1-phosphate uridyltransferase family. This sequence in the C-terminal section; belongs to the transferase hexapeptide repeat family. As to quaternary structure, homotrimer. Requires Mg(2+) as cofactor.

The protein localises to the cytoplasm. It catalyses the reaction alpha-D-glucosamine 1-phosphate + acetyl-CoA = N-acetyl-alpha-D-glucosamine 1-phosphate + CoA + H(+). The enzyme catalyses N-acetyl-alpha-D-glucosamine 1-phosphate + UTP + H(+) = UDP-N-acetyl-alpha-D-glucosamine + diphosphate. Its pathway is nucleotide-sugar biosynthesis; UDP-N-acetyl-alpha-D-glucosamine biosynthesis; N-acetyl-alpha-D-glucosamine 1-phosphate from alpha-D-glucosamine 6-phosphate (route II): step 2/2. The protein operates within nucleotide-sugar biosynthesis; UDP-N-acetyl-alpha-D-glucosamine biosynthesis; UDP-N-acetyl-alpha-D-glucosamine from N-acetyl-alpha-D-glucosamine 1-phosphate: step 1/1. It functions in the pathway bacterial outer membrane biogenesis; LPS lipid A biosynthesis. Functionally, catalyzes the last two sequential reactions in the de novo biosynthetic pathway for UDP-N-acetylglucosamine (UDP-GlcNAc). The C-terminal domain catalyzes the transfer of acetyl group from acetyl coenzyme A to glucosamine-1-phosphate (GlcN-1-P) to produce N-acetylglucosamine-1-phosphate (GlcNAc-1-P), which is converted into UDP-GlcNAc by the transfer of uridine 5-monophosphate (from uridine 5-triphosphate), a reaction catalyzed by the N-terminal domain. This is Bifunctional protein GlmU from Photorhabdus laumondii subsp. laumondii (strain DSM 15139 / CIP 105565 / TT01) (Photorhabdus luminescens subsp. laumondii).